Reading from the N-terminus, the 91-residue chain is uncharacterized protein (91 aa).

The protein resides in the plastid. It localises to the cyanelle. This is an uncharacterized protein from Cyanophora paradoxa.